The primary structure comprises 550 residues: Rab GTPase-activating protein 22 (550 aa).

The interval 1–49 (MKALRRSYTSTSSGNSSSSSSLPSSSSSSLPSSSSSSPPSSNSNSYSNS) is disordered. The segment covering 7–49 (SYTSTSSGNSSSSSSLPSSSSSSLPSSSSSSPPSSNSNSYSNS) has biased composition (low complexity). The Rab-GAP TBC domain occupies 126–460 (GVDPSIRAEV…CLWEVMWADQ (335 aa)).

Interacts with AGT1 in peroxisome under biotic stress conditions. Expressed in root meristems, vascular tissues, guard cells, trichomes, styles and receptacles.

Its subcellular location is the nucleus. The protein resides in the peroxisome. Its function is as follows. Involved in defense response against fungal and bacterial pathogens. Acts as a negative regulator of jasmonate (JA) responses during infection by the soil-born fungal pathogen Verticillium longisporum. Involved in abscisic acid-dependent stomata closure in response to infection by V.longisporum and Pseudomonas syringae. May be a downstream component of brassinosteroid-mediated signaling. The protein is Rab GTPase-activating protein 22 of Arabidopsis thaliana (Mouse-ear cress).